Here is a 293-residue protein sequence, read N- to C-terminus: Protease HtpX homolog (293 aa).

2 helical membrane passes run 4 to 24 and 38 to 58; these read IFLF…TMRI and LTGL…ISLL. A Zn(2+)-binding site is contributed by His146. Glu147 is an active-site residue. His150 contacts Zn(2+). 2 consecutive transmembrane segments (helical) span residues 161 to 181 and 198 to 218; these read LIQG…GYFV and ATVI…VAWF. Zn(2+) is bound at residue Glu223.

This sequence belongs to the peptidase M48B family. It depends on Zn(2+) as a cofactor.

The protein localises to the cell inner membrane. The protein is Protease HtpX homolog of Bordetella parapertussis (strain 12822 / ATCC BAA-587 / NCTC 13253).